The primary structure comprises 24 residues: Fibrinogen gamma chain (24 aa).

In terms of assembly, heterohexamer; disulfide linked. Contains 2 sets of 3 non-identical chains (alpha, beta and gamma). The 2 heterotrimers are in head to head conformation with the N-termini in a small central domain. Post-translationally, conversion of fibrinogen to fibrin is triggered by thrombin, which cleaves fibrinopeptides A and B from alpha and beta chains, and thus exposes the N-terminal polymerization sites responsible for the formation of the soft clot. The soft clot is converted into the hard clot by factor XIIIA which catalyzes the epsilon-(gamma-glutamyl)lysine cross-linking between gamma chains (stronger) and between alpha chains (weaker) of different monomers.

It localises to the secreted. Its function is as follows. Together with fibrinogen alpha (FGA) and fibrinogen beta (FGB), polymerizes to form an insoluble fibrin matrix. Has a major function in hemostasis as one of the primary components of blood clots. In addition, functions during the early stages of wound repair to stabilize the lesion and guide cell migration during re-epithelialization. Was originally thought to be essential for platelet aggregation, based on in vitro studies using anticoagulated blood. However, subsequent studies have shown that it is not absolutely required for thrombus formation in vivo. Enhances expression of SELP in activated platelets via an ITGB3-dependent pathway. Maternal fibrinogen is essential for successful pregnancy. Fibrin deposition is also associated with infection, where it protects against IFNG-mediated hemorrhage. May also facilitate the antibacterial immune response via both innate and T-cell mediated pathways. The sequence is that of Fibrinogen gamma chain (FGG) from Canis lupus familiaris (Dog).